Here is a 267-residue protein sequence, read N- to C-terminus: Small ribosomal subunit protein uS3 (267 aa).

The KH type-2 domain maps to 43–111 (IRKEMSKDLE…QVQLNIFEVK (69 aa)). Positions 216-267 (FEEQQAQQNNRPGRRGGDRRPRRGNRSAAPQAAEAPKAEAPAEAAPAAETKE) are disordered. The segment covering 241–267 (RSAAPQAAEAPKAEAPAEAAPAAETKE) has biased composition (low complexity).

The protein belongs to the universal ribosomal protein uS3 family. Part of the 30S ribosomal subunit. Forms a tight complex with proteins S10 and S14.

Functionally, binds the lower part of the 30S subunit head. Binds mRNA in the 70S ribosome, positioning it for translation. The sequence is that of Small ribosomal subunit protein uS3 from Bifidobacterium longum subsp. infantis (strain ATCC 15697 / DSM 20088 / JCM 1222 / NCTC 11817 / S12).